Consider the following 172-residue polypeptide: Signal peptidase complex catalytic subunit SEC11 (172 aa).

At 1–14 the chain is on the cytoplasmic side; sequence MLSSLGNPRQAAAQ. Residues 15–35 form a helical; Signal-anchor for type II membrane protein membrane-spanning segment; the sequence is LMNFALILSTAFMMWKGLSVI. The Lumenal segment spans residues 36-172; sequence TDSPSPIVVV…MGLLVVLQRE (137 aa). Residues serine 49 and histidine 90 each act as charge relay system in the active site. An N-linked (GlcNAc...) asparagine glycan is attached at asparagine 111. Aspartate 115 acts as the Charge relay system in catalysis. The interval 158-169 is C-terminal short (CTS) helix; that stretch reads VMLGIMGLLVVL.

It belongs to the peptidase S26B family. As to quaternary structure, component of the signal peptidase complex (SPC) composed of a catalytic subunit SEC11 and three accessory subunits SPC1, SPC2 and SPC3. The complex induces a local thinning of the ER membrane which is used to measure the length of the signal peptide (SP) h-region of protein substrates. This ensures the selectivity of the complex towards h-regions shorter than 18-20 amino acids. SPC associates with the translocon complex.

Its subcellular location is the endoplasmic reticulum membrane. It carries out the reaction Cleavage of hydrophobic, N-terminal signal or leader sequences from secreted and periplasmic proteins.. Functionally, catalytic component of the signal peptidase complex (SPC) which catalyzes the cleavage of N-terminal signal sequences from nascent proteins as they are translocated into the lumen of the endoplasmic reticulum. Specifically cleaves N-terminal signal peptides that contain a hydrophobic alpha-helix (h-region) shorter than 18-20 amino acids. The polypeptide is Signal peptidase complex catalytic subunit SEC11 (SEC11) (Fusarium vanettenii (strain ATCC MYA-4622 / CBS 123669 / FGSC 9596 / NRRL 45880 / 77-13-4) (Fusarium solani subsp. pisi)).